Here is a 365-residue protein sequence, read N- to C-terminus: Peptide chain release factor 2 (365 aa).

The residue at position 252 (Gln252) is an N5-methylglutamine.

This sequence belongs to the prokaryotic/mitochondrial release factor family. Post-translationally, methylated by PrmC. Methylation increases the termination efficiency of RF2.

It is found in the cytoplasm. Its function is as follows. Peptide chain release factor 2 directs the termination of translation in response to the peptide chain termination codons UGA and UAA. The protein is Peptide chain release factor 2 (prfB) of Salmonella typhimurium (strain LT2 / SGSC1412 / ATCC 700720).